An 886-amino-acid chain; its full sequence is Leucine-rich repeat-containing protein sog2 (886 aa).

LRR repeat units follow at residues 28–49 (NALT…QLER), 53–74 (RIAR…ILKF), 76–97 (RLRY…LCRL), 99–120 (SLEI…FGAL), 122–143 (NLKV…IAHM), and 145–166 (NLEI…IANN). Disordered stretches follow at residues 236-288 (SPGM…THPP), 301-364 (SPRQ…ASPI), 394-431 (PTQL…STRL), and 455-483 (RIFA…TNDS). Over residues 243-277 (VTPSPHSHSPAGHQQSTPKSTLSKTNENSEGTLYD) the composition is skewed to polar residues. Position 301 is a phosphoserine (S301). Polar residues-rich tracts occupy residues 312–347 (SLAT…SSVA), 394–406 (PTQL…TSAI), and 419–431 (SNST…STRL). S464 is subject to Phosphoserine.

The protein localises to the cytoplasm. Its subcellular location is the nucleus. The protein is Leucine-rich repeat-containing protein sog2 of Schizosaccharomyces pombe (strain 972 / ATCC 24843) (Fission yeast).